A 286-amino-acid polypeptide reads, in one-letter code: Beta-lactamase SHV-8 (286 aa).

Residues 1–21 form the signal peptide; it reads MRYIRLCIISLLATLPLAVHA. Catalysis depends on Ser-66, which acts as the Acyl-ester intermediate. Cys-73 and Cys-119 are joined by a disulfide. The Proton acceptor role is filled by Glu-164. Residue 230-232 coordinates substrate; the sequence is KTG.

Belongs to the class-A beta-lactamase family.

The enzyme catalyses a beta-lactam + H2O = a substituted beta-amino acid. Functionally, SHV enzymes hydrolyze broad spectrum cephalosporins notably cefotaxime and ceftazidime. In Escherichia coli, this protein is Beta-lactamase SHV-8 (bla).